The sequence spans 186 residues: Transcription factor FapR (186 aa).

This sequence belongs to the FapR family.

Functionally, transcriptional factor involved in regulation of membrane lipid biosynthesis by repressing genes involved in fatty acid and phospholipid metabolism. The sequence is that of Transcription factor FapR from Halalkalibacterium halodurans (strain ATCC BAA-125 / DSM 18197 / FERM 7344 / JCM 9153 / C-125) (Bacillus halodurans).